The following is a 1009-amino-acid chain: Dihydropyrimidine dehydrogenase [NADP(+)] (1009 aa).

The 4Fe-4S ferredoxin-type 1 domain occupies 69-99; the sequence is RGALFESARCLKCADAPCQKGCPTQLDIKSF. Residues Cys78, Cys81, Cys86, and Cys90 each contribute to the [4Fe-4S] cluster site. Val128 contributes to the FAD binding site. Positions 129, 135, 139, and 155 each coordinate [4Fe-4S] cluster. FAD is bound by residues 193-197, 217-225, Arg234, and Leu260; these read GCGPT and EKEQYLGGL. NADP(+) is bound by residues 339-342, 363-364, Arg370, 436-438, and 479-484; these read AGDT, RR, AFG, and DLVGNG. 478 to 486 serves as a coordination point for FAD; the sequence is GDLVGNGTT. FMN contacts are provided by residues Ser548 and 572–573; that span reads KT. Substrate contacts are provided by residues Asn607 and 666-668; that span reads NLS. Cys669 acts as the Proton acceptor in catalysis. Lys707 is an FMN binding site. 734–735 contributes to the substrate binding site; that stretch reads NT. Residues Gly765, 791–793, and 814–815 each bind FMN; these read TGG and CS. 2 consecutive 4Fe-4S ferredoxin-type domains span residues 932–964 and 965–995; these read VVAL…FDGK and THIP…MVPR. Cys941, Cys944, Cys947, Cys951, Cys974, Cys977, Cys980, and Cys984 together coordinate [4Fe-4S] cluster.

Belongs to the dihydropyrimidine dehydrogenase family. Homodimer. The cofactor is [4Fe-4S] cluster. Requires FAD as cofactor. FMN is required as a cofactor.

The protein localises to the cytoplasm. The catalysed reaction is 5,6-dihydrouracil + NADP(+) = uracil + NADPH + H(+). The protein operates within amino-acid biosynthesis; beta-alanine biosynthesis. In terms of biological role, involved in pyrimidine base degradation. Catalyzes the reduction of uracil and thymine. The chain is Dihydropyrimidine dehydrogenase [NADP(+)] (pyd1) from Dictyostelium discoideum (Social amoeba).